Here is a 467-residue protein sequence, read N- to C-terminus: Variant surface glycoprotein 7 (467 aa).

Polar residues predominate over residues 77–87; the sequence is TIAAGATNTKL. The disordered stretch occupies residues 77 to 133; the sequence is TIAAGATNTKLSGHHPNQGRRGRRRSSSARPNNSKGNSPSKRAGGAVRGETPASGRL. Residues 93 to 103 are compositionally biased toward basic residues; that stretch reads NQGRRGRRRSS. The span at 107–116 shows a compositional bias: polar residues; sequence PNNSKGNSPS. N-linked (GlcNAc...) asparagine glycans are attached at residues asparagine 108 and asparagine 252. The tract at residues 382–407 is disordered; that stretch reads AEKVENPRSQGNPETAENKKEGGNTA. Residue asparagine 416 is glycosylated (N-linked (GlcNAc...) asparagine). Aspartate 444 is lipidated: GPI-anchor amidated aspartate. Residues 445–467 constitute a propeptide, removed in mature form; that stretch reads SSFLLSKQFALSVVSAAFAALLF.

The protein resides in the cell membrane. In terms of biological role, VSG forms a coat on the surface of the parasite. The trypanosome evades the immune response of the host by expressing a series of antigenically distinct VSGs from an estimated 1000 VSG genes. This is Variant surface glycoprotein 7 from Trypanosoma brucei rhodesiense.